The primary structure comprises 118 residues: NADPH-dependent 7-cyano-7-deazaguanine reductase (118 aa).

Cys31 (thioimide intermediate) is an active-site residue. Catalysis depends on Asp38, which acts as the Proton donor. Substrate contacts are provided by residues 53 to 55 and 72 to 73; these read IEL and YE.

Belongs to the GTP cyclohydrolase I family. QueF type 1 subfamily.

Its subcellular location is the cytoplasm. The enzyme catalyses 7-aminomethyl-7-carbaguanine + 2 NADP(+) = 7-cyano-7-deazaguanine + 2 NADPH + 3 H(+). It functions in the pathway tRNA modification; tRNA-queuosine biosynthesis. Catalyzes the NADPH-dependent reduction of 7-cyano-7-deazaguanine (preQ0) to 7-aminomethyl-7-deazaguanine (preQ1). This chain is NADPH-dependent 7-cyano-7-deazaguanine reductase, found in Prosthecochloris aestuarii (strain DSM 271 / SK 413).